The following is a 169-amino-acid chain: Cytochrome c-type biogenesis protein CcmE (169 aa).

Residues 1–7 (MTRKQRR) are Cytoplasmic-facing. Residues 8–28 (MTIIGGSLAVLALAAALVLNA) traverse the membrane as a helical; Signal-anchor for type II membrane protein segment. At 29–169 (LRDSIVFFST…AQGNPQGAVR (141 aa)) the chain is on the periplasmic side. Heme is bound by residues H122 and Y126. A disordered region spans residues 143–169 (DDYGGKASDGVKPAATTAQGNPQGAVR). Residues 158–169 (TTAQGNPQGAVR) show a composition bias toward polar residues.

This sequence belongs to the CcmE/CycJ family.

Its subcellular location is the cell inner membrane. Functionally, heme chaperone required for the biogenesis of c-type cytochromes. Transiently binds heme delivered by CcmC and transfers the heme to apo-cytochromes in a process facilitated by CcmF and CcmH. The chain is Cytochrome c-type biogenesis protein CcmE from Bradyrhizobium diazoefficiens (strain JCM 10833 / BCRC 13528 / IAM 13628 / NBRC 14792 / USDA 110).